Here is a 191-residue protein sequence, read N- to C-terminus: Aminodeoxychorismate synthase component 2 (191 aa).

Residues 1–191 (MLLLIDNYDS…HQLLDNFLNR (191 aa)) form the Glutamine amidotransferase type-1 domain. Catalysis depends on residues Cys-79, His-172, and Glu-174.

In terms of assembly, monomer. Heterodimer consisting of two non-identical subunits: a glutamine amidotransferase subunit (PabA) and a aminodeoxychorismate synthase subunit (PabB).

The catalysed reaction is chorismate + L-glutamine = 4-amino-4-deoxychorismate + L-glutamate. The protein operates within cofactor biosynthesis; tetrahydrofolate biosynthesis; 4-aminobenzoate from chorismate: step 1/2. Part of a heterodimeric complex that catalyzes the two-step biosynthesis of 4-amino-4-deoxychorismate (ADC), a precursor of p-aminobenzoate (PABA) and tetrahydrofolate. In the first step, a glutamine amidotransferase (PabA) generates ammonia as a substrate that, along with chorismate, is used in the second step, catalyzed by aminodeoxychorismate synthase (PabB) to produce ADC. PabA converts glutamine into glutamate only in the presence of stoichiometric amounts of PabB. The sequence is that of Aminodeoxychorismate synthase component 2 (pabA) from Serratia marcescens.